The sequence spans 297 residues: Homoserine kinase (297 aa).

84 to 94 (PLSKGFGSSAA) provides a ligand contact to ATP.

It belongs to the GHMP kinase family. Homoserine kinase subfamily.

The protein resides in the cytoplasm. It catalyses the reaction L-homoserine + ATP = O-phospho-L-homoserine + ADP + H(+). Its pathway is amino-acid biosynthesis; L-threonine biosynthesis; L-threonine from L-aspartate: step 4/5. In terms of biological role, catalyzes the ATP-dependent phosphorylation of L-homoserine to L-homoserine phosphate. The sequence is that of Homoserine kinase from Shouchella clausii (strain KSM-K16) (Alkalihalobacillus clausii).